A 181-amino-acid chain; its full sequence is Shikimate kinase 2 (181 aa).

An ATP-binding site is contributed by 12–17 (GCGKTT). Mg(2+) contacts are provided by threonine 16 and aspartate 32. Substrate contacts are provided by aspartate 34, arginine 58, and glycine 79. Residues 112–126 (EAEPEVGLRPTLTGK) form an LID domain region. Arginine 120 contributes to the ATP binding site. Arginine 139 provides a ligand contact to substrate.

Belongs to the shikimate kinase family. AroL subfamily. As to quaternary structure, monomer. Mg(2+) serves as cofactor.

It localises to the cytoplasm. It carries out the reaction shikimate + ATP = 3-phosphoshikimate + ADP + H(+). It participates in metabolic intermediate biosynthesis; chorismate biosynthesis; chorismate from D-erythrose 4-phosphate and phosphoenolpyruvate: step 5/7. Catalyzes the specific phosphorylation of the 3-hydroxyl group of shikimic acid using ATP as a cosubstrate. This is Shikimate kinase 2 from Escherichia fergusonii (strain ATCC 35469 / DSM 13698 / CCUG 18766 / IAM 14443 / JCM 21226 / LMG 7866 / NBRC 102419 / NCTC 12128 / CDC 0568-73).